A 92-amino-acid polypeptide reads, in one-letter code: Cell division protein FtsB (92 aa).

Residues 1-3 are Cytoplasmic-facing; sequence MRF. A helical membrane pass occupies residues 4–21; the sequence is FQVGLLCLALFVQYRLWF. Residues 22–92 lie on the Periplasmic side of the membrane; that stretch reads GHNGVQDYTR…TFIRVLPAQQ (71 aa). Positions 40-73 form a coiled coil; that stretch reads LQTNEKLIKRNKVLTADIEDLKLGHEGIEERARN.

The protein belongs to the FtsB family. In terms of assembly, part of a complex composed of FtsB, FtsL and FtsQ.

It is found in the cell inner membrane. Essential cell division protein. May link together the upstream cell division proteins, which are predominantly cytoplasmic, with the downstream cell division proteins, which are predominantly periplasmic. This chain is Cell division protein FtsB, found in Pseudoalteromonas translucida (strain TAC 125).